The primary structure comprises 637 residues: Chaperone protein DnaK (637 aa).

Thr-196 bears the Phosphothreonine; by autocatalysis mark. Disordered stretches follow at residues 484–528 and 598–637; these read KATG…EVDT and TEAGAPGAAGAAGAAGQGQSASSGKDDEVKNADFEVVDDK. The span at 501 to 528 shows a compositional bias: basic and acidic residues; that stretch reads SETEIEKMKKDASSHADEDKKKKEEVDT. The span at 600–620 shows a compositional bias: low complexity; the sequence is AGAPGAAGAAGAAGQGQSASS. Over residues 621–637 the composition is skewed to basic and acidic residues; that stretch reads GKDDEVKNADFEVVDDK.

This sequence belongs to the heat shock protein 70 family.

In terms of biological role, acts as a chaperone. The sequence is that of Chaperone protein DnaK from Chloroherpeton thalassium (strain ATCC 35110 / GB-78).